A 426-amino-acid polypeptide reads, in one-letter code: Glutamyl-tRNA reductase (426 aa).

Residues 49–52, serine 101, 106–108, and glutamine 112 each bind substrate; these read TCNR and EPQ. The active-site Nucleophile is the cysteine 50. 181–186 lines the NADP(+) pocket; sequence GAGETI. Positions 405–426 are disordered; the sequence is RLFPEKPGYQHPPHSYPDREDR.

The protein belongs to the glutamyl-tRNA reductase family. Homodimer.

The catalysed reaction is (S)-4-amino-5-oxopentanoate + tRNA(Glu) + NADP(+) = L-glutamyl-tRNA(Glu) + NADPH + H(+). The protein operates within porphyrin-containing compound metabolism; protoporphyrin-IX biosynthesis; 5-aminolevulinate from L-glutamyl-tRNA(Glu): step 1/2. In terms of biological role, catalyzes the NADPH-dependent reduction of glutamyl-tRNA(Glu) to glutamate 1-semialdehyde (GSA). This chain is Glutamyl-tRNA reductase, found in Xanthomonas axonopodis pv. citri (strain 306).